The chain runs to 226 residues: Sugar fermentation stimulation protein homolog (226 aa).

The protein belongs to the SfsA family.

This Clostridium beijerinckii (strain ATCC 51743 / NCIMB 8052) (Clostridium acetobutylicum) protein is Sugar fermentation stimulation protein homolog.